The chain runs to 157 residues: Xanthine-guanine phosphoribosyltransferase (157 aa).

5-phospho-alpha-D-ribose 1-diphosphate is bound by residues 42 to 43 (RG) and 93 to 101 (DDLVDTGNT). Asp-94 serves as a coordination point for Mg(2+). 2 residues coordinate guanine: Asp-97 and Ile-140. Xanthine-binding residues include Asp-97 and Ile-140. GMP-binding positions include 97-101 (DTGNT) and 139-140 (WI).

Belongs to the purine/pyrimidine phosphoribosyltransferase family. XGPT subfamily. Homotetramer. Mg(2+) serves as cofactor.

It is found in the cell inner membrane. The catalysed reaction is GMP + diphosphate = guanine + 5-phospho-alpha-D-ribose 1-diphosphate. The enzyme catalyses XMP + diphosphate = xanthine + 5-phospho-alpha-D-ribose 1-diphosphate. It carries out the reaction IMP + diphosphate = hypoxanthine + 5-phospho-alpha-D-ribose 1-diphosphate. The protein operates within purine metabolism; GMP biosynthesis via salvage pathway; GMP from guanine: step 1/1. Its pathway is purine metabolism; XMP biosynthesis via salvage pathway; XMP from xanthine: step 1/1. Functionally, purine salvage pathway enzyme that catalyzes the transfer of the ribosyl-5-phosphate group from 5-phospho-alpha-D-ribose 1-diphosphate (PRPP) to the N9 position of the 6-oxopurines guanine and xanthine to form the corresponding ribonucleotides GMP (guanosine 5'-monophosphate) and XMP (xanthosine 5'-monophosphate), with the release of PPi. To a lesser extent, also acts on hypoxanthine. The protein is Xanthine-guanine phosphoribosyltransferase of Actinobacillus pleuropneumoniae serotype 5b (strain L20).